We begin with the raw amino-acid sequence, 280 residues long: Ribosomal protein L11 methyltransferase (280 aa).

Threonine 130, glycine 151, aspartate 172, and asparagine 213 together coordinate S-adenosyl-L-methionine.

This sequence belongs to the methyltransferase superfamily. PrmA family.

It is found in the cytoplasm. It carries out the reaction L-lysyl-[protein] + 3 S-adenosyl-L-methionine = N(6),N(6),N(6)-trimethyl-L-lysyl-[protein] + 3 S-adenosyl-L-homocysteine + 3 H(+). Methylates ribosomal protein L11. In Nitratiruptor sp. (strain SB155-2), this protein is Ribosomal protein L11 methyltransferase.